Reading from the N-terminus, the 101-residue chain is NAD(P)H-quinone oxidoreductase subunit 4L, chloroplastic (101 aa).

3 consecutive transmembrane segments (helical) span residues 2 to 22 (ILEHVLVLSAYLFLIGLYGLI), 32 to 52 (MCLELILNAVNMNLVTFSDFF), and 61 to 81 (IFCIFVIAIAAAEAAIGLAIV).

It belongs to the complex I subunit 4L family. As to quaternary structure, NDH is composed of at least 16 different subunits, 5 of which are encoded in the nucleus.

It localises to the plastid. The protein localises to the chloroplast thylakoid membrane. The enzyme catalyses a plastoquinone + NADH + (n+1) H(+)(in) = a plastoquinol + NAD(+) + n H(+)(out). It carries out the reaction a plastoquinone + NADPH + (n+1) H(+)(in) = a plastoquinol + NADP(+) + n H(+)(out). In terms of biological role, NDH shuttles electrons from NAD(P)H:plastoquinone, via FMN and iron-sulfur (Fe-S) centers, to quinones in the photosynthetic chain and possibly in a chloroplast respiratory chain. The immediate electron acceptor for the enzyme in this species is believed to be plastoquinone. Couples the redox reaction to proton translocation, and thus conserves the redox energy in a proton gradient. The polypeptide is NAD(P)H-quinone oxidoreductase subunit 4L, chloroplastic (Draba nemorosa (Woodland whitlowgrass)).